We begin with the raw amino-acid sequence, 361 residues long: Peptide chain release factor 1 (361 aa).

Position 236 is an N5-methylglutamine (Gln236). The span at 285–309 (TAKDSARAADRKAQVGSGDRSERIR) shows a compositional bias: basic and acidic residues. The disordered stretch occupies residues 285–311 (TAKDSARAADRKAQVGSGDRSERIRTY).

Belongs to the prokaryotic/mitochondrial release factor family. Post-translationally, methylated by PrmC. Methylation increases the termination efficiency of RF1.

The protein resides in the cytoplasm. In terms of biological role, peptide chain release factor 1 directs the termination of translation in response to the peptide chain termination codons UAG and UAA. This chain is Peptide chain release factor 1, found in Methylorubrum extorquens (strain CM4 / NCIMB 13688) (Methylobacterium extorquens).